A 468-amino-acid chain; its full sequence is 3-isopropylmalate dehydratase large subunit (468 aa).

3 residues coordinate [4Fe-4S] cluster: Cys347, Cys407, and Cys410.

The protein belongs to the aconitase/IPM isomerase family. LeuC type 1 subfamily. Heterodimer of LeuC and LeuD. [4Fe-4S] cluster serves as cofactor.

It carries out the reaction (2R,3S)-3-isopropylmalate = (2S)-2-isopropylmalate. The protein operates within amino-acid biosynthesis; L-leucine biosynthesis; L-leucine from 3-methyl-2-oxobutanoate: step 2/4. In terms of biological role, catalyzes the isomerization between 2-isopropylmalate and 3-isopropylmalate, via the formation of 2-isopropylmaleate. This is 3-isopropylmalate dehydratase large subunit from Synechococcus sp. (strain CC9311).